We begin with the raw amino-acid sequence, 339 residues long: Alcohol dehydrogenase (339 aa).

The Zn(2+) site is built by C38, H61, C92, C95, C98, C106, and C148. NAD(+) contacts are provided by residues 172 to 177, D195, K200, 260 to 262, and R331; these read GIGGLG and VGL.

Belongs to the zinc-containing alcohol dehydrogenase family. Zn(2+) is required as a cofactor.

It catalyses the reaction a primary alcohol + NAD(+) = an aldehyde + NADH + H(+). The enzyme catalyses a secondary alcohol + NAD(+) = a ketone + NADH + H(+). Its activity is regulated as follows. The rate-limiting step is NADH release. Catabolite repression. In terms of biological role, active with primary alcohols, including methanol. The chain is Alcohol dehydrogenase (adh) from Geobacillus stearothermophilus (Bacillus stearothermophilus).